A 95-amino-acid chain; its full sequence is uncharacterized protein (95 aa).

This is an uncharacterized protein from Escherichia coli (strain K12).